An 89-amino-acid chain; its full sequence is Small ribosomal subunit protein uS15 (89 aa).

Belongs to the universal ribosomal protein uS15 family. In terms of assembly, part of the 30S ribosomal subunit. Forms a bridge to the 50S subunit in the 70S ribosome, contacting the 23S rRNA.

One of the primary rRNA binding proteins, it binds directly to 16S rRNA where it helps nucleate assembly of the platform of the 30S subunit by binding and bridging several RNA helices of the 16S rRNA. In terms of biological role, forms an intersubunit bridge (bridge B4) with the 23S rRNA of the 50S subunit in the ribosome. This chain is Small ribosomal subunit protein uS15, found in Prosthecochloris aestuarii (strain DSM 271 / SK 413).